Reading from the N-terminus, the 591-residue chain is Dihydroxyacetone kinase 2 (591 aa).

Positions S8–W344 constitute a DhaK domain. The segment at A40–S59 is disordered. Residues G58 to H61, K109, and D114 each bind substrate. H223 acts as the Tele-hemiaminal-histidine intermediate in catalysis. Positions D384–T587 constitute a DhaL domain. ATP is bound by residues D413–C416, T459–S460, T511–L512, and D572–G574.

This sequence belongs to the dihydroxyacetone kinase (DAK) family.

It carries out the reaction dihydroxyacetone + ATP = dihydroxyacetone phosphate + ADP + H(+). It catalyses the reaction D-glyceraldehyde + ATP = D-glyceraldehyde 3-phosphate + ADP + H(+). It participates in polyol metabolism; glycerol fermentation; glycerone phosphate from glycerol (oxidative route): step 2/2. Functionally, catalyzes both the phosphorylation of dihydroxyacetone and of glyceraldehyde. The protein is Dihydroxyacetone kinase 2 (DAK2) of Saccharomyces cerevisiae (strain ATCC 204508 / S288c) (Baker's yeast).